The primary structure comprises 259 residues: ATP synthase subunit a (259 aa).

A run of 6 helical transmembrane segments spans residues 37–57 (LSITNSTIWMWLAVAVAFLFM), 101–121 (YFPAIFTLFLLVLFCNLLGLI), 131–151 (LVVTATLALSVFFFATGLAIV), 157–177 (FIGFFVPSGVPPMLLILMVPI), 203–223 (VLAIMFFFAATLPLGGLLMPA), and 232–252 (FELFIGFIQAYIFTILTCVYI).

This sequence belongs to the ATPase A chain family. F-type ATPases have 2 components, CF(1) - the catalytic core - and CF(0) - the membrane proton channel. CF(1) has five subunits: alpha(3), beta(3), gamma(1), delta(1), epsilon(1). CF(0) has three main subunits: a(1), b(2) and c(9-12). The alpha and beta chains form an alternating ring which encloses part of the gamma chain. CF(1) is attached to CF(0) by a central stalk formed by the gamma and epsilon chains, while a peripheral stalk is formed by the delta and b chains.

The protein localises to the cell inner membrane. Key component of the proton channel; it plays a direct role in the translocation of protons across the membrane. This chain is ATP synthase subunit a, found in Magnetococcus marinus (strain ATCC BAA-1437 / JCM 17883 / MC-1).